The following is a 906-amino-acid chain: Protein translocase subunit SecA (906 aa).

ATP is bound by residues glutamine 86, 104–108, and aspartate 499; that span reads GEGKT. Positions 863 to 885 are disordered; it reads PVVSRIDPKDRNPDDPTSWGRVS. Zn(2+) is bound by residues cysteine 890, cysteine 892, cysteine 901, and histidine 902.

The protein belongs to the SecA family. As to quaternary structure, monomer and homodimer. Part of the essential Sec protein translocation apparatus which comprises SecA, SecYEG and auxiliary proteins SecDF-YajC and YidC. Requires Zn(2+) as cofactor.

It localises to the cell inner membrane. The protein resides in the cytoplasm. The catalysed reaction is ATP + H2O + cellular proteinSide 1 = ADP + phosphate + cellular proteinSide 2.. Part of the Sec protein translocase complex. Interacts with the SecYEG preprotein conducting channel. Has a central role in coupling the hydrolysis of ATP to the transfer of proteins into and across the cell membrane, serving both as a receptor for the preprotein-SecB complex and as an ATP-driven molecular motor driving the stepwise translocation of polypeptide chains across the membrane. This Rickettsia akari (strain Hartford) protein is Protein translocase subunit SecA.